Reading from the N-terminus, the 249-residue chain is DNA polymerase sliding clamp (249 aa).

It belongs to the PCNA family. In terms of assembly, homotrimer. The subunits circularize to form a toroid; DNA passes through its center. Replication factor C (RFC) is required to load the toroid on the DNA.

Sliding clamp subunit that acts as a moving platform for DNA processing. Responsible for tethering the catalytic subunit of DNA polymerase and other proteins to DNA during high-speed replication. This is DNA polymerase sliding clamp from Methanococcus vannielii (strain ATCC 35089 / DSM 1224 / JCM 13029 / OCM 148 / SB).